The sequence spans 650 residues: Threonine--tRNA ligase (650 aa).

The 66-residue stretch at 1–66 folds into the TGS domain; the sequence is MVQITLPDGS…EHDAQLAIVT (66 aa). Residues 247 to 538 are catalytic; the sequence is DHRKIGRDLD…LIENHAGAMP (292 aa). Positions 338, 389, and 515 each coordinate Zn(2+).

This sequence belongs to the class-II aminoacyl-tRNA synthetase family. In terms of assembly, homodimer. The cofactor is Zn(2+).

It localises to the cytoplasm. It carries out the reaction tRNA(Thr) + L-threonine + ATP = L-threonyl-tRNA(Thr) + AMP + diphosphate + H(+). Functionally, catalyzes the attachment of threonine to tRNA(Thr) in a two-step reaction: L-threonine is first activated by ATP to form Thr-AMP and then transferred to the acceptor end of tRNA(Thr). Also edits incorrectly charged L-seryl-tRNA(Thr). The chain is Threonine--tRNA ligase from Bordetella petrii (strain ATCC BAA-461 / DSM 12804 / CCUG 43448).